Consider the following 100-residue polypeptide: uncharacterized protein (100 aa).

The interval 42–84 (PGEPWRTAGGIGEGGAGGDGAAAGGEGDVHGRPAGAEDGEDGA) is disordered. Gly residues predominate over residues 50-67 (GGIGEGGAGGDGAAAGGE).

This is an uncharacterized protein from Torque teno tamarin virus (isolate So-TTV2).